The following is a 472-amino-acid chain: Nuclear receptor subfamily 0 group B member 1 (472 aa).

Repeat copies occupy residues 1 to 67 (MAGE…YRCC), 68 to 135 (FCGE…YRCC), and 136 to 202 (FCGE…YRSY). The 4 X 67 AA tandem repeats stretch occupies residues 1–255 (MAGEDHPWQG…RLITLKDPQV (255 aa)). 3 consecutive short sequence motifs (LXXLL motif) follow at residues 13 to 17 (LYNLL), 80 to 84 (LYSML), and 148 to 152 (LYSLL). The NR LBD domain occupies 190 to 471 (QSTQAMAFLY…DMMLEMLCAK (282 aa)). The stretch at 203 to 255 (VCGEEQPQQISVASGTPVSADQTPATPQEQPRAPWWDASPGVQRLITLKDPQV) is one 4; truncated repeat. A compositionally biased stretch (polar residues) spans 214 to 231 (VASGTPVSADQTPATPQE). 2 disordered regions span residues 214 to 238 (VASGTPVSADQTPATPQEQPRAPWW) and 324 to 343 (TTRRQETEGPEPAEPQATEQ). Positions 463 to 468 (MMLEML) match the AF-2 motif motif.

It belongs to the nuclear hormone receptor family. NR0 subfamily. As to quaternary structure, homodimer. Interacts with NR5A1, NR5A2, NR0B2 and with COPS2. Interacts with ESRRB; represses ESRRB activity at the GATA6 promoter. In terms of tissue distribution, expressed in adult cerebral cortex, spinal cord, thymus, heart, lung, ovary, testis, adrenal gland, hypothalamus, spleen and kidney.

The protein resides in the nucleus. It localises to the cytoplasm. Functionally, nuclear receptor that lacks a DNA-binding domain and acts as a corepressor that inhibits the transcriptional activity of other nuclear receptors through heterodimeric interactions. Component of a cascade required for the development of the hypothalamic-pituitary-adrenal-gonadal axis. May also have a role in the development of the embryo and in the maintenance of embryonic stem cell pluripotency. The sequence is that of Nuclear receptor subfamily 0 group B member 1 (Nr0b1) from Mus musculus (Mouse).